The chain runs to 128 residues: Con-Ins F1 (128 aa).

The signal sequence occupies residues 1–24 (MTTSSYFLLVTLGLLLYVCRSSFG). 4 disulfides stabilise this stretch: Cys29/Cys104, Cys41/Cys107, Cys53/Cys120, and Cys106/Cys111. A propeptide spans 59-89 (LQGGTGKKRGRASPLRKRRAFLSMLKARAKR) (c peptide). 4-carboxyglutamate; partial is present on Glu115. Ser127 is subject to Serine amide.

The protein belongs to the insulin family. Heterodimer of A and B chains; disulfide-linked. Expressed by the venom gland.

It is found in the secreted. In terms of biological role, this venom insulin facilitates prey capture by rapidly inducing hypoglycemic shock. Intraperitoneal injection of this peptide into zebrafish lowers blood glucose with the same potency than human insulin. In vivo, when applied to water, this peptide reduces overall locomotor activity of zebrafish larvae, observed as a significant decrease in the percentage of time spent swimming and movement frequency. The polypeptide is Con-Ins F1 (Conus floridulus (Cone snail)).